The sequence spans 578 residues: Interleukin-10 receptor subunit alpha (578 aa).

Positions 1–21 (MLPCLVVLLAALLSLRLGSDA) are cleaved as a signal peptide. Over 22–235 (HGTELPSPPS…LTRQYFTVTN (214 aa)) the chain is Extracellular. N-linked (GlcNAc...) asparagine glycosylation is found at asparagine 50, asparagine 74, asparagine 110, asparagine 154, asparagine 177, and asparagine 189. Cysteine 56 and cysteine 75 form a disulfide bridge. Cysteine 202 and cysteine 223 form a disulfide bridge. The chain crosses the membrane as a helical span at residues 236-256 (VIIFFAFVLLLSGALAYCLAL). Topologically, residues 257–578 (QLYVRRRKKL…PLISSLQSSE (322 aa)) are cytoplasmic. The tract at residues 313–436 (LHGSTDSGFG…PPEPEVPGEE (124 aa)) is disordered. Residues 316 to 332 (STDSGFGSTKPSLQTEE) are compositionally biased toward polar residues. Residues 318–323 (DSGFGS) carry the BTRC recognition motif motif. Residues 357 to 371 (GDSCSSGSSNSTDSG) are compositionally biased toward low complexity. A compositionally biased stretch (polar residues) spans 377–396 (PSLSPSTGPTWEQQVGSNSR).

It belongs to the type II cytokine receptor family. Interacts with IL10. Interacts with IL10RB. Interacts (via its cytoplasmic domain) with JAK1 (via N-terminus). Interacts with BTRC; this interaction leads to IL10RA ubiquitination and subsequent degradation. Interacts with STAT3. As to quaternary structure, (Microbial infection) Interacts with human cytomegalovirus protein IL10. In terms of assembly, (Microbial infection) Interacts with Epstein-Barr virus protein IL10. Post-translationally, phosphorylated. Phosphorylation of the cytoplasmic tail induced STAT3 activation. In terms of processing, ubiquitinated by BTRC; ubiquitination leads to endocytosis and subsequent degradation of IL10RA. Primarily expressed in hematopoetic cells including B-cells, T-cells, NK cells, monocytes and macrophages. Not expressed in non-hematopoetic cells such as fibroblasts or endothelial cells.

Its subcellular location is the cell membrane. The protein resides in the cytoplasm. Cell surface receptor for the cytokine IL10 that participates in IL10-mediated anti-inflammatory functions, limiting excessive tissue disruption caused by inflammation. Upon binding to IL10, induces a conformational change in IL10RB, allowing IL10RB to bind IL10 as well. In turn, the heterotetrameric assembly complex, composed of two subunits of IL10RA and IL10RB, activates the kinases JAK1 and TYK2 that are constitutively associated with IL10RA and IL10RB respectively. These kinases then phosphorylate specific tyrosine residues in the intracellular domain in IL10RA leading to the recruitment and subsequent phosphorylation of STAT3. Once phosphorylated, STAT3 homodimerizes, translocates to the nucleus and activates the expression of anti-inflammatory genes. In addition, IL10RA-mediated activation of STAT3 inhibits starvation-induced autophagy. The chain is Interleukin-10 receptor subunit alpha (IL10RA) from Homo sapiens (Human).